The sequence spans 185 residues: Fimbrial subunit type 1 (185 aa).

The first 22 residues, 1-22, serve as a signal peptide directing secretion; sequence MRHKLMTSTIASLMFVAAAAVA. A disulfide bond links cysteine 46 and cysteine 86.

This sequence belongs to the fimbrial protein family.

It is found in the fimbrium. The chain is Fimbrial subunit type 1 from Salmonella typhimurium.